Consider the following 418-residue polypeptide: Serine--tRNA ligase (418 aa).

231–233 (TAE) contacts L-serine. 262-264 (RSE) contributes to the ATP binding site. Glutamate 285 is a binding site for L-serine. 349 to 352 (EISS) contributes to the ATP binding site. An L-serine-binding site is contributed by serine 385.

It belongs to the class-II aminoacyl-tRNA synthetase family. Type-1 seryl-tRNA synthetase subfamily. Homodimer. The tRNA molecule binds across the dimer.

The protein localises to the cytoplasm. The catalysed reaction is tRNA(Ser) + L-serine + ATP = L-seryl-tRNA(Ser) + AMP + diphosphate + H(+). The enzyme catalyses tRNA(Sec) + L-serine + ATP = L-seryl-tRNA(Sec) + AMP + diphosphate + H(+). Its pathway is aminoacyl-tRNA biosynthesis; selenocysteinyl-tRNA(Sec) biosynthesis; L-seryl-tRNA(Sec) from L-serine and tRNA(Sec): step 1/1. Functionally, catalyzes the attachment of serine to tRNA(Ser). Is also able to aminoacylate tRNA(Sec) with serine, to form the misacylated tRNA L-seryl-tRNA(Sec), which will be further converted into selenocysteinyl-tRNA(Sec). This Ureaplasma parvum serovar 3 (strain ATCC 27815 / 27 / NCTC 11736) protein is Serine--tRNA ligase.